Consider the following 107-residue polypeptide: Nucleoid-associated protein GDI3467/Gdia_2910 (107 aa).

This sequence belongs to the YbaB/EbfC family. In terms of assembly, homodimer.

Its subcellular location is the cytoplasm. The protein localises to the nucleoid. In terms of biological role, binds to DNA and alters its conformation. May be involved in regulation of gene expression, nucleoid organization and DNA protection. The protein is Nucleoid-associated protein GDI3467/Gdia_2910 of Gluconacetobacter diazotrophicus (strain ATCC 49037 / DSM 5601 / CCUG 37298 / CIP 103539 / LMG 7603 / PAl5).